The primary structure comprises 147 residues: Large ribosomal subunit protein bL9 (147 aa).

This sequence belongs to the bacterial ribosomal protein bL9 family.

In terms of biological role, binds to the 23S rRNA. The chain is Large ribosomal subunit protein bL9 from Thermoanaerobacter pseudethanolicus (strain ATCC 33223 / 39E) (Clostridium thermohydrosulfuricum).